We begin with the raw amino-acid sequence, 216 residues long: Urease accessory protein UreG (216 aa).

24–31 serves as a coordination point for GTP; the sequence is GPVGSGKT.

The protein belongs to the SIMIBI class G3E GTPase family. UreG subfamily. As to quaternary structure, homodimer. UreD, UreF and UreG form a complex that acts as a GTP-hydrolysis-dependent molecular chaperone, activating the urease apoprotein by helping to assemble the nickel containing metallocenter of UreC. The UreE protein probably delivers the nickel.

Its subcellular location is the cytoplasm. Functionally, facilitates the functional incorporation of the urease nickel metallocenter. This process requires GTP hydrolysis, probably effectuated by UreG. The sequence is that of Urease accessory protein UreG from Variovorax paradoxus (strain S110).